We begin with the raw amino-acid sequence, 3146 residues long: Bassianolide nonribosomal cyclodepsipeptide synthetase (3146 aa).

A compositionally biased stretch (polar residues) spans 1-12 (MEPPNNANTGQL). The tract at residues 1 to 23 (MEPPNNANTGQLGPTLPNGTVDL) is disordered. The tract at residues 69–454 (HVVYEIPEDV…INKLQSTDGS (386 aa)) is condensation 1. The tract at residues 495–887 (GDTPNKPAVC…GRMDSQVKIR (393 aa)) is adenylation 1. Residues 1015 to 1091 (PDASAGVTKL…SLQAAIGGSS (77 aa)) enclose the Carrier 1 domain. S1052 carries the O-(pantetheine 4'-phosphoryl)serine modification. The interval 1109-1538 (SYSQGRLWFL…QTLISVVPLT (430 aa)) is condensation 2. The tract at residues 1567 to 1973 (FRTQVASYPD…GRMDFQFKIR (407 aa)) is adenylation 2. Residues 2041 to 2181 (TYTELDTVSS…FPTRDYLERV (141 aa)) are S-adenosyl-L-methionine-dependent N-methyltransferase (MT). 2 Carrier domains span residues 2514–2588 (FPLS…RQQL) and 2614–2688 (APTT…EVSQ). Residues S2548 and S2648 each carry the O-(pantetheine 4'-phosphoryl)serine modification. The interval 2734–3138 (QDVYLATHLQ…THLMEQVCNT (405 aa)) is condensation 3.

This sequence belongs to the NRP synthetase family.

It catalyses the reaction 4 (R)-2-hydroxy-3-methylbutanoate + 4 L-leucine + 4 S-adenosyl-L-methionine + 8 ATP = bassianolide + 8 AMP + 4 S-adenosyl-L-homocysteine + 8 diphosphate + 8 H(+). Its function is as follows. Bassianolide nonribosomal synthetase that mediates the biosynthesis of bassianolide (BSL), a non-ribosomal cyclodepsipeptide that shows insecticidal and cancer cell antiproliferative activity. BSLS first catalyzes the iterative synthesis of an enzyme-bound dipeptidol monomer intermediate from D-2-hydroxyisovalerate and L-leucine before performing the condensation and cyclization of 4 dipeptidol monomers to yield the cyclic tetrameric ester bassianolide. The N-methyltransferase MT domain is responsible for the methylation of the leucine residues of bassianolide. BSLS is flexible with both the amino acid and hydroxyl acid precursors, and produces bassianolide as the major product (containing N-methyl-L-Leu), together with small amounts of beauvericin and its analogs beauvericins A-C (containing N-methyl-L-Phe). This Beauveria bassiana (White muscardine disease fungus) protein is Bassianolide nonribosomal cyclodepsipeptide synthetase.